The following is a 212-amino-acid chain: Cyclin-P4-1 (212 aa).

The protein belongs to the cyclin family. Cyclin U/P subfamily.

The polypeptide is Cyclin-P4-1 (CYCP4-1) (Oryza sativa subsp. japonica (Rice)).